A 414-amino-acid polypeptide reads, in one-letter code: Histidine--tRNA ligase (414 aa).

This sequence belongs to the class-II aminoacyl-tRNA synthetase family. As to quaternary structure, homodimer.

It is found in the cytoplasm. It carries out the reaction tRNA(His) + L-histidine + ATP = L-histidyl-tRNA(His) + AMP + diphosphate + H(+). The chain is Histidine--tRNA ligase (hisS) from Mycoplasma pneumoniae (strain ATCC 29342 / M129 / Subtype 1) (Mycoplasmoides pneumoniae).